The primary structure comprises 297 residues: Small ribosomal subunit biogenesis GTPase RsgA (297 aa).

Positions 65 to 223 (TNEIGRPAVA…IADTPGFSAI (159 aa)) constitute a CP-type G domain. GTP contacts are provided by residues 114 to 117 (SKAD) and 166 to 174 (GQSGAGKST). Zn(2+) is bound by residues C247, C252, H254, and C260.

It belongs to the TRAFAC class YlqF/YawG GTPase family. RsgA subfamily. As to quaternary structure, monomer. Associates with 30S ribosomal subunit, binds 16S rRNA. Zn(2+) is required as a cofactor.

Its subcellular location is the cytoplasm. Functionally, one of several proteins that assist in the late maturation steps of the functional core of the 30S ribosomal subunit. Helps release RbfA from mature subunits. May play a role in the assembly of ribosomal proteins into the subunit. Circularly permuted GTPase that catalyzes slow GTP hydrolysis, GTPase activity is stimulated by the 30S ribosomal subunit. The polypeptide is Small ribosomal subunit biogenesis GTPase RsgA (Lactobacillus gasseri (strain ATCC 33323 / DSM 20243 / BCRC 14619 / CIP 102991 / JCM 1131 / KCTC 3163 / NCIMB 11718 / NCTC 13722 / AM63)).